The primary structure comprises 166 residues: Lipoprotein signal peptidase (166 aa).

Helical transmembrane passes span 9–29 (ASGALAPWLGISLIVILFDQL), 45–65 (ALTSFFNLVLVYNRGAAFGFL), 71–91 (WQRWAFTALGIGATLVICYLL), and 99–119 (LFSLSLALILGGALGNVIDRL). Active-site residues include D126 and D144. A helical membrane pass occupies residues 135–155 (WHFPAFNLADSAITVGAVLLI).

This sequence belongs to the peptidase A8 family.

It is found in the cell inner membrane. The catalysed reaction is Release of signal peptides from bacterial membrane prolipoproteins. Hydrolyzes -Xaa-Yaa-Zaa-|-(S,diacylglyceryl)Cys-, in which Xaa is hydrophobic (preferably Leu), and Yaa (Ala or Ser) and Zaa (Gly or Ala) have small, neutral side chains.. It participates in protein modification; lipoprotein biosynthesis (signal peptide cleavage). This protein specifically catalyzes the removal of signal peptides from prolipoproteins. This Burkholderia vietnamiensis (strain G4 / LMG 22486) (Burkholderia cepacia (strain R1808)) protein is Lipoprotein signal peptidase.